Consider the following 312-residue polypeptide: Cathepsin O (312 aa).

An N-terminal signal peptide occupies residues 1–23 (MKPQLVNLLLLCCCCLGRHGVAG). The propeptide at 24 to 98 (TWSWSHQREA…EGQRPIPNVS (75 aa)) is activation peptide. N-linked (GlcNAc...) asparagine glycosylation is found at Asn53 and Asn96. Disulfide bonds link Cys120–Cys161, Cys154–Cys195, and Cys253–Cys301. The active site involves Cys123. Active-site residues include His260 and Asn280.

This sequence belongs to the peptidase C1 family.

The protein localises to the lysosome. It catalyses the reaction The recombinant human enzyme hydrolyzes synthetic endopeptidase substrates including Z-Phe-Arg-NHMec and Z-Arg-Arg-NHMec.. Functionally, proteolytic enzyme possibly involved in normal cellular protein degradation and turnover. The sequence is that of Cathepsin O (Ctso) from Mus musculus (Mouse).